The sequence spans 229 residues: Protein GrpE (229 aa).

Residues 1–89 form a disordered region; it reads MSDFNKDDYL…AEGSSLTPLG (89 aa). The span at 24–36 shows a compositional bias: low complexity; the sequence is ASPDADGADAPSD. Positions 39–50 are enriched in basic and acidic residues; that stretch reads EQLKDDMLKDAA. Residues 65-84 show a composition bias toward low complexity; that stretch reads KAAAEATADAASDGDAEGSS.

Belongs to the GrpE family. As to quaternary structure, homodimer.

It is found in the cytoplasm. Its function is as follows. Participates actively in the response to hyperosmotic and heat shock by preventing the aggregation of stress-denatured proteins, in association with DnaK and GrpE. It is the nucleotide exchange factor for DnaK and may function as a thermosensor. Unfolded proteins bind initially to DnaJ; upon interaction with the DnaJ-bound protein, DnaK hydrolyzes its bound ATP, resulting in the formation of a stable complex. GrpE releases ADP from DnaK; ATP binding to DnaK triggers the release of the substrate protein, thus completing the reaction cycle. Several rounds of ATP-dependent interactions between DnaJ, DnaK and GrpE are required for fully efficient folding. This Bifidobacterium animalis subsp. lactis (strain AD011) protein is Protein GrpE.